The sequence spans 820 residues: Breast cancer anti-estrogen resistance protein 3 homolog (820 aa).

A2 is modified (N-acetylalanine). 5 positions are modified to phosphoserine: S32, S72, S77, S176, and S284. Positions D40–Q81 are disordered. The SH2 domain occupies W148–I247. The residue at position 329 (K329) is an N6-methyllysine. Residues Q346 to P367 are disordered. Residues S353, S358, and S370 each carry the phosphoserine modification. Position 437 is an omega-N-methylarginine (R437). S466 carries the post-translational modification Phosphoserine. The Ras-GEF domain maps to D543–P813. Residues L739–R743 are mediates the interaction with BCAR1/p130CAS.

Part of a complex comprised of PTPRA, BCAR1, BCAR3 (via SH2 domain) and SRC; the formation of the complex is dependent on integrin mediated-tyrosine phosphorylation of PTPRA. Within the complex, interacts (via SH2 domain) with PTPRA (when phosphorylated on 'Tyr-825'). Interacts (via Ras-GEF domain) with BCAR1. Interacts (via Ras-GEF domain) with NEDD9. Interacts with PTK2B/FAK1. Interacts with PTPN1. Interacts (via SH2 domain) with EGFR (when tyrosine-phosphorylated). Phosphorylated on tyrosine residues. Abundantly expressed in the lung and brain, with lower expression in splenic lymphocytes and liver (at protein level). Expressed in splenic lymphocytes (at protein level). Expressed in the lymph node cortical region, periphery of the splenic white pulp and in alveolar lung fibroblasts. Expressed in epithelial cells in the lens equatorial region and early stage nucleated cortical lens fiber cells. Expressed in the thymus. Expressed in B-cells.

The protein localises to the cytoplasm. It localises to the cell junction. Its subcellular location is the focal adhesion. Acts as an adapter protein downstream of several growth factor receptors to promote cell proliferation, migration, and redistribution of actin fibers. Specifically involved in INS/insulin signaling pathway by mediating MAPK1/ERK2-MAPK3/ERK1 activation and DNA synthesis. Promotes insulin-mediated membrane ruffling. In response to vasoconstrictor peptide EDN1, involved in the activation of RAP1 downstream of PTK2B via interaction with phosphorylated BCAR1. Inhibits cell migration and invasion via regulation of TGFB-mediated matrix digestion, actin filament rearrangement, and inhibition of invadopodia activity. May inhibit TGFB-SMAD signaling, via facilitating BCAR1 and SMAD2 and/or SMAD3 interaction. Regulates EGF-induced DNA synthesis. Required for the maintenance of ocular lens morphology and structural integrity, potentially via regulation of focal adhesion complex signaling. Acts upstream of PTPRA to regulate the localization of BCAR1 and PTPRA to focal adhesions, via regulation of SRC-mediated phosphorylation of PTPRA. Positively regulates integrin-induced tyrosine phosphorylation of BCAR1. Acts as a guanine nucleotide exchange factor (GEF) for small GTPases RALA, RAP1A and RRAS. However, in a contrasting study, lacks GEF activity towards RAP1. The sequence is that of Breast cancer anti-estrogen resistance protein 3 homolog (Bcar3) from Mus musculus (Mouse).